An 82-amino-acid polypeptide reads, in one-letter code: RNA-binding protein BH0128 (82 aa).

The protein belongs to the eukaryotic ribosomal protein eL8 family.

The chain is RNA-binding protein BH0128 from Halalkalibacterium halodurans (strain ATCC BAA-125 / DSM 18197 / FERM 7344 / JCM 9153 / C-125) (Bacillus halodurans).